A 647-amino-acid chain; its full sequence is Pollen receptor-like kinase 2 (647 aa).

The first 21 residues, 1-21, serve as a signal peptide directing secretion; it reads MESKCLMFVSIVSVFFMVVNG. 5 LRR repeats span residues 87–109, 110–134, 136–159, 161–183, and 185–203; these read LNSL…EFKK, LVAL…AFDG, GWLK…LVKS, KLIE…RHHP, and MLNL…SFST. The helical transmembrane segment at 248-268 threads the bilayer; sequence IVAAAVAALAASLIIIGVVIF. The Protein kinase domain occupies 338-613; the sequence is KASAEILGSG…EAVEKMEDLM (276 aa). Ser-340 is modified (phosphoserine). ATP-binding positions include 344–352 and Lys-366; that span reads LGSGCFGAS. At Ser-418 the chain carries Phosphoserine. Position 438 is a phosphothreonine (Thr-438). Tyr-508 is subject to Phosphotyrosine. The interval 620-647 is disordered; it reads DDDFYSTYASEADGRSSRGLSSEGINLS. Residues 637-647 show a composition bias toward polar residues; that stretch reads RGLSSEGINLS.

It belongs to the protein kinase superfamily. Ser/Thr protein kinase family. In terms of assembly, part of a complex containing ROPGEF1 and ARAC11/ROP1. The interaction between PRK2, ROPGEF1 and ARAC11/ROP1 is phosphorylation-independent. Interacts with ROPGEF12 (via C-terminus). Interacts with ROPGEF1 (via PRONE domain). In terms of tissue distribution, expressed in pollen and/or in flowers, but not in leaves. Expressed in pollen tube.

The protein resides in the cell membrane. It carries out the reaction L-seryl-[protein] + ATP = O-phospho-L-seryl-[protein] + ADP + H(+). It catalyses the reaction L-threonyl-[protein] + ATP = O-phospho-L-threonyl-[protein] + ADP + H(+). Its activity is regulated as follows. The phosphorylation activity is calcium-independent. Its function is as follows. Receptor-like kinase involved in the control of pollen germination and pollen tube polar growth. Phosphorylates ROPGEF1 in its C-terminal region, releasing its auto-inhibition, and thereby activating the ROP1 signaling pathway. May act as a scaffolding protein, recruiting ROPGEF12 to the plasma membrane by binding to its C-terminal domain. Phosphorylates ROPGEF12, releasing its auto-inhibition. The protein is Pollen receptor-like kinase 2 of Arabidopsis thaliana (Mouse-ear cress).